A 156-amino-acid chain; its full sequence is MAGFMKRTMSYLGMSDVVPEDEDDEVIDEEPESSFDTDRSVTPIPAASTQPSTSQRKSVAPFHANINRITTIHPQSYEDAQLVGRALRDGIPVVLNLTDVSQSQAYRIIDFSSGVVFGISGSIERVTERVFLLSPARVDIVAEDTESGMSDNLFEN.

The interval 15–58 is disordered; that stretch reads SDVVPEDEDDEVIDEEPESSFDTDRSVTPIPAASTQPSTSQRKS. Residues 18–35 are compositionally biased toward acidic residues; sequence VPEDEDDEVIDEEPESSF. The span at 47-57 shows a compositional bias: polar residues; it reads ASTQPSTSQRK.

The protein belongs to the SepF family. Homodimer. Interacts with FtsZ.

It localises to the cytoplasm. Cell division protein that is part of the divisome complex and is recruited early to the Z-ring. Probably stimulates Z-ring formation, perhaps through the cross-linking of FtsZ protofilaments. Its function overlaps with FtsA. The sequence is that of Cell division protein SepF from Bifidobacterium animalis subsp. lactis (strain AD011).